A 103-amino-acid chain; its full sequence is Large ribosomal subunit protein bL21 (103 aa).

Belongs to the bacterial ribosomal protein bL21 family. As to quaternary structure, part of the 50S ribosomal subunit. Contacts protein L20.

Its function is as follows. This protein binds to 23S rRNA in the presence of protein L20. The polypeptide is Large ribosomal subunit protein bL21 (Idiomarina loihiensis (strain ATCC BAA-735 / DSM 15497 / L2-TR)).